The sequence spans 349 residues: Anthranilate phosphoribosyltransferase (349 aa).

5-phospho-alpha-D-ribose 1-diphosphate-binding positions include Gly82, 85-86, 92-95, 110-118, and Ser122; these read GD, NVST, and KHGNRAVSG. Gly82 contributes to the anthranilate binding site. Residue Ser94 coordinates Mg(2+). Position 113 (Asn113) interacts with anthranilate. Arg168 is an anthranilate binding site. Mg(2+)-binding residues include Asp227 and Glu228.

The protein belongs to the anthranilate phosphoribosyltransferase family. In terms of assembly, homodimer. Requires Mg(2+) as cofactor.

The enzyme catalyses N-(5-phospho-beta-D-ribosyl)anthranilate + diphosphate = 5-phospho-alpha-D-ribose 1-diphosphate + anthranilate. It participates in amino-acid biosynthesis; L-tryptophan biosynthesis; L-tryptophan from chorismate: step 2/5. In terms of biological role, catalyzes the transfer of the phosphoribosyl group of 5-phosphorylribose-1-pyrophosphate (PRPP) to anthranilate to yield N-(5'-phosphoribosyl)-anthranilate (PRA). In Pseudomonas putida (strain ATCC 47054 / DSM 6125 / CFBP 8728 / NCIMB 11950 / KT2440), this protein is Anthranilate phosphoribosyltransferase.